Consider the following 336-residue polypeptide: Fructose-1,6-bisphosphatase class 1 (336 aa).

The Mg(2+) site is built by Glu-90, Asp-112, Leu-114, and Asp-115. Residues 115-118 (DGSS), Asn-211, and Lys-277 each bind substrate. Glu-283 provides a ligand contact to Mg(2+).

The protein belongs to the FBPase class 1 family. As to quaternary structure, homotetramer. It depends on Mg(2+) as a cofactor.

The protein resides in the cytoplasm. It carries out the reaction beta-D-fructose 1,6-bisphosphate + H2O = beta-D-fructose 6-phosphate + phosphate. The protein operates within carbohydrate biosynthesis; gluconeogenesis. This chain is Fructose-1,6-bisphosphatase class 1, found in Pseudomonas putida (strain GB-1).